We begin with the raw amino-acid sequence, 105 residues long: Large ribosomal subunit protein uL24 (105 aa).

This sequence belongs to the universal ribosomal protein uL24 family. Part of the 50S ribosomal subunit.

Functionally, one of two assembly initiator proteins, it binds directly to the 5'-end of the 23S rRNA, where it nucleates assembly of the 50S subunit. Its function is as follows. One of the proteins that surrounds the polypeptide exit tunnel on the outside of the subunit. The sequence is that of Large ribosomal subunit protein uL24 from Saccharophagus degradans (strain 2-40 / ATCC 43961 / DSM 17024).